The sequence spans 203 residues: MACGATLKRTLDFDPLLSPASPKRRRCAPLSAPTSAAASPLSAAAATAASFSAAAASPQKYLRMEPSPFGDVSSRLTTEQILYNIKQEYKRMQKRRHLETSFQQTDPCCTSDAQPHAFLLSGPASPGTSSAASSPLKKEQPLFTLRQVGMICERLLKEREEKVREEYEEILNTKLAEQYDAFVKFTHDQIMRRYGEQPASYVS.

A phosphoserine mark is found at serine 18 and serine 21. The Nuclear localization signal signature appears at 22–27 (PKRRRC). Serine 57 carries the post-translational modification Phosphoserine. The SYVS motif motif lies at 200-203 (SYVS).

This sequence belongs to the akirin family. In terms of assembly, homodimer. Interacts with IPO9; the interaction is direct. Associates (via SYVS motif) with 20S and 26S proteasomes. Interacts with SMARCD1; promoting SWI/SNF complex recruitment. Interacts with NFKBIZ. Interacts with YWHAB. Polyubiquitinated. Polyubiquitination is dependent of UBR5 that extends pre-ubiquitinated AKIRIN2. In terms of tissue distribution, widely expressed with the highest expression in peripheral blood leukocytes.

It is found in the nucleus. The protein resides in the cytoplasm. The protein localises to the membrane. Molecular adapter that acts as a bridge between a variety of multiprotein complexes, and which is involved in embryonic development, immunity, myogenesis and brain development. Plays a key role in nuclear protein degradation by promoting import of proteasomes into the nucleus: directly binds to fully assembled 20S proteasomes at one end and to nuclear import receptor IPO9 at the other end, bridging them together and mediating the import of pre-assembled proteasome complexes through the nuclear pore. Involved in innate immunity by regulating the production of interleukin-6 (IL6) downstream of Toll-like receptor (TLR): acts by bridging the NF-kappa-B inhibitor NFKBIZ and the SWI/SNF complex, leading to promote induction of IL6. Also involved in adaptive immunity by promoting B-cell activation. Involved in brain development: required for the survival and proliferation of cerebral cortical progenitor cells. Involved in myogenesis: required for skeletal muscle formation and skeletal development, possibly by regulating expression of muscle differentiation factors. Also plays a role in facilitating interdigital tissue regression during limb development. This is Akirin-2 from Homo sapiens (Human).